We begin with the raw amino-acid sequence, 321 residues long: Protein APA1 (321 aa).

A disordered region spans residues 50 to 70 (SLIEKPERGQTPEGEDPLGKP). Lys-54 serves as a coordination point for substrate. At Thr-60 the chain carries Phosphothreonine. Substrate-binding positions include 93–94 (NK), Asn-145, and 151–154 (GSSL). The active-site Nucleophile is His-158. Substrate contacts are provided by residues Gln-160, 273–275 (NST), Met-280, and Lys-284.

Belongs to the ATP adenylyltransferase family. In terms of assembly, monomer. A divalent metal cation serves as cofactor. Post-translationally, the N-terminus is blocked.

The protein localises to the cytoplasm. It localises to the nucleus. It carries out the reaction ADP + ATP + H(+) = P(1),P(4)-bis(5'-adenosyl) tetraphosphate + phosphate. It catalyses the reaction sulfate + ADP + H(+) = adenosine 5'-phosphosulfate + phosphate. In terms of biological role, ap4A phosphorylase catalyzes the phosphorolytic degradation of bis(5'-adenosyl) tetraphosphate (Ap4A) into ADP and ATP. Can also use other Np4N' nucleotides (where N and N' stand for A,C,G or U) as substrates with equal efficiency. Cannot catalyze the reverse reaction. Additionally, this enzyme can also catalyze the phosphorolytic degradation of adenosine 5'-phosphosulfate (AMPS) into ADP and sulfate, the reversible exchange reaction between inorganic phosphate and the beta-phosphate of a nucleoside diphosphate (NDP), and the synthesis of Ap4A from AMPS plus ATP. In Saccharomyces cerevisiae (strain ATCC 204508 / S288c) (Baker's yeast), this protein is Protein APA1.